The chain runs to 514 residues: Peptide chain release factor 3 (514 aa).

Residues 8–268 (KKRRTFAIIS…TFLKFAPEPH (261 aa)) enclose the tr-type G domain. GTP contacts are provided by residues 17 to 24 (SHPDAGKT), 85 to 89 (DTPGH), and 139 to 142 (NKLD).

Belongs to the TRAFAC class translation factor GTPase superfamily. Classic translation factor GTPase family. PrfC subfamily.

It is found in the cytoplasm. In terms of biological role, increases the formation of ribosomal termination complexes and stimulates activities of RF-1 and RF-2. It binds guanine nucleotides and has strong preference for UGA stop codons. It may interact directly with the ribosome. The stimulation of RF-1 and RF-2 is significantly reduced by GTP and GDP, but not by GMP. This chain is Peptide chain release factor 3, found in Streptococcus thermophilus (strain ATCC BAA-491 / LMD-9).